A 489-amino-acid polypeptide reads, in one-letter code: Male-specific lethal 1-like 1 (489 aa).

Disordered stretches follow at residues 126–164 (PMVS…VRKG) and 224–311 (VKKD…EDMQ). Residues 179–227 (LLLQLELIEQQQKHLHNKNKEIEDLKAEKEMLMARIERMEHRLQMVKKD) adopt a coiled-coil conformation. Residues 347–466 (TVEVPSWRES…LKQQDFDLPW (120 aa)) form the PEHE domain. An interaction with KAT8 HAT domain region spans residues 371–389 (ECLDDSVFLKRHSKLELDE). The Bipartite nuclear localization signal motif lies at 380 to 394 (KRHSKLELDEKRRKR).

Belongs to the msl-1 family. In terms of assembly, component of a multisubunit histone acetyltransferase complex (MSL). Interacts (via PEHE domain) with KAT8 (via HAT domain) and MSL3 (via MRG domain); both interactions are direct.

Its subcellular location is the nucleus. It is found in the nucleoplasm. The protein resides in the nucleus speckle. Functionally, component of histone acetyltransferase complex. Within MSL complex, promotes ubiquitination of histone H2B. This chain is Male-specific lethal 1-like 1 (msl1l1), found in Danio rerio (Zebrafish).